The sequence spans 142 residues: Transcriptional regulator MraZ (142 aa).

SpoVT-AbrB domains follow at residues 5 to 48 (EFEY…PLCE) and 77 to 120 (AFDV…DKET).

The protein belongs to the MraZ family. As to quaternary structure, forms oligomers.

It is found in the cytoplasm. The protein resides in the nucleoid. The protein is Transcriptional regulator MraZ of Dehalococcoides mccartyi (strain ATCC BAA-2100 / JCM 16839 / KCTC 5957 / BAV1).